The sequence spans 182 residues: Glycerol-3-phosphate acyltransferase 1 (182 aa).

Helical transmembrane passes span 5 to 25 (MQFL…AYIV), 54 to 74 (GYFI…VSIA), 81 to 101 (STFV…PIVF), 117 to 137 (IAFD…FYLI), and 157 to 177 (ILYS…VLIL).

Belongs to the PlsY family. Probably interacts with PlsX.

The protein localises to the cell membrane. The enzyme catalyses an acyl phosphate + sn-glycerol 3-phosphate = a 1-acyl-sn-glycero-3-phosphate + phosphate. It participates in lipid metabolism; phospholipid metabolism. Functionally, catalyzes the transfer of an acyl group from acyl-phosphate (acyl-PO(4)) to glycerol-3-phosphate (G3P) to form lysophosphatidic acid (LPA). This enzyme utilizes acyl-phosphate as fatty acyl donor, but not acyl-CoA or acyl-ACP. This is Glycerol-3-phosphate acyltransferase 1 from Bacillus cereus (strain ATCC 10987 / NRS 248).